The chain runs to 275 residues: Putative Ig-like V-type domain-containing protein FPV055 (275 aa).

2 consecutive Ig-like V-type domains span residues Lys-25 to Gly-122 and Pro-140 to Ser-239.

This chain is Putative Ig-like V-type domain-containing protein FPV055, found in Fowlpox virus (strain NVSL) (FPV).